The sequence spans 591 residues: MTRDLEKLVAQTILQGFDAQYGRFLEVTAGAQQRFEQADWPAVQQAMKQRIHLYDHHVGLVVEQLRCITGIRCDDADFLARVKHIYTRLLPDYPRFEIAESFFNSVYCRLFNHRELTPDKLFVFSSQPEQRFREIPRPIAKTFVPTDGWQNMLEKLLSDVPLRLPWEDLPRDIGYIVAYLQRTFSAEQLAQATLQMANELFYRNKAAWLVGKLSLPDGIFPFLLPIHHNERGALFIDTCLTSQADASIVFGFARSYFMVYAPLPSALVAWLRDILPGKTTAELYLAIGCQKHSKTEYYREYLHYIAESEEQFIIAPGVKGMVMLVFTLPSFDRVFKVIKDRFAPQKEVSAERVMACYQLVKEHDRVGRMADTQEYENFVIDKHRISSELLDELWREVPDKLEDLGDRLVIRHLYMERRMTPLNLYLEQANAQQLHDVIEEYGNAIKQLAAANIFPGDMLFKNFGVTRHGRVVFYDYDEICYMTEVNFRKIPPPRHPEDELAAEPWYSVAPNDVFPEEFPHFLCSDRHIRTLFEEMHGDLFCADYWRALQQRIREGHIEDVYAYRRRKRFSQRADPRYTTAENDSGFCRNPA.

ATP-binding positions include 315–321 (APGVKGM) and Lys-336. Asp-371 is a catalytic residue.

The protein belongs to the AceK family.

The protein resides in the cytoplasm. It catalyses the reaction L-seryl-[isocitrate dehydrogenase] + ATP = O-phospho-L-seryl-[isocitrate dehydrogenase] + ADP + H(+). Functionally, bifunctional enzyme which can phosphorylate or dephosphorylate isocitrate dehydrogenase (IDH) on a specific serine residue. This is a regulatory mechanism which enables bacteria to bypass the Krebs cycle via the glyoxylate shunt in response to the source of carbon. When bacteria are grown on glucose, IDH is fully active and unphosphorylated, but when grown on acetate or ethanol, the activity of IDH declines drastically concomitant with its phosphorylation. The chain is Isocitrate dehydrogenase kinase/phosphatase from Pectobacterium carotovorum subsp. carotovorum (strain PC1).